The chain runs to 240 residues: 1-(5-phosphoribosyl)-5-[(5-phosphoribosylamino)methylideneamino] imidazole-4-carboxamide isomerase (240 aa).

Aspartate 8 serves as the catalytic Proton acceptor. Aspartate 129 acts as the Proton donor in catalysis.

The protein belongs to the HisA/HisF family.

The protein localises to the cytoplasm. It catalyses the reaction 1-(5-phospho-beta-D-ribosyl)-5-[(5-phospho-beta-D-ribosylamino)methylideneamino]imidazole-4-carboxamide = 5-[(5-phospho-1-deoxy-D-ribulos-1-ylimino)methylamino]-1-(5-phospho-beta-D-ribosyl)imidazole-4-carboxamide. Its pathway is amino-acid biosynthesis; L-histidine biosynthesis; L-histidine from 5-phospho-alpha-D-ribose 1-diphosphate: step 4/9. The protein is 1-(5-phosphoribosyl)-5-[(5-phosphoribosylamino)methylideneamino] imidazole-4-carboxamide isomerase of Listeria monocytogenes serotype 4b (strain CLIP80459).